A 286-amino-acid polypeptide reads, in one-letter code: Octanoyltransferase (286 aa).

The region spanning 50-278 (LRTPDELWIV…NIAQRHAGVI (229 aa)) is the BPL/LPL catalytic domain. Substrate-binding positions include 89-96 (RGGQVTWH), 190-192 (SLG), and 203-205 (GVA). Residue Cys221 is the Acyl-thioester intermediate of the active site.

It belongs to the LipB family.

The protein localises to the cytoplasm. The enzyme catalyses octanoyl-[ACP] + L-lysyl-[protein] = N(6)-octanoyl-L-lysyl-[protein] + holo-[ACP] + H(+). The protein operates within protein modification; protein lipoylation via endogenous pathway; protein N(6)-(lipoyl)lysine from octanoyl-[acyl-carrier-protein]: step 1/2. Functionally, catalyzes the transfer of endogenously produced octanoic acid from octanoyl-acyl-carrier-protein onto the lipoyl domains of lipoate-dependent enzymes. Lipoyl-ACP can also act as a substrate although octanoyl-ACP is likely to be the physiological substrate. In Psychrobacter arcticus (strain DSM 17307 / VKM B-2377 / 273-4), this protein is Octanoyltransferase.